Here is a 469-residue protein sequence, read N- to C-terminus: UTP--glucose-1-phosphate uridylyltransferase 2 (469 aa).

An N-acetylalanine modification is found at Ala2. Residues 85–88, Lys99, Gln162, and Gly191 contribute to the UTP site; that span reads LNGG. Substrate is bound at residue 87-88; that stretch reads GG. Substrate contacts are provided by residues His192 and 220-222; that span reads NSD. Residues Asp222 and Lys360 each contribute to the UTP site.

This sequence belongs to the UDPGP type 1 family. In terms of tissue distribution, expressed in cauline leaves, flowers and siliques.

The protein resides in the cytoplasm. It catalyses the reaction alpha-D-glucose 1-phosphate + UTP + H(+) = UDP-alpha-D-glucose + diphosphate. Converts glucose 1-phosphate to UDP-glucose, which is the major glycosyl donor for polysaccharides. Acts redundantly with UGP1 and is essential for the synthesis of sucrose, starch and cell wall, and callose deposition. In Arabidopsis thaliana (Mouse-ear cress), this protein is UTP--glucose-1-phosphate uridylyltransferase 2.